A 222-amino-acid chain; its full sequence is MFEYLPELMKGLHTSLTLTVASLIVALILALIFTIILTLKTPVLVWLVRGYITLFTGTPLLVQIFLIYYGPGQFPTLQEYPALWHLLSEPWLCALIALSLNSAAYTTQLFYGAIRAIPEGQWQSCSALGMSKKDTLAILLPYAFKRSLSSYSNEVVLVFKSTSLAYTITLMEVMGYSQLLYGRTYDVMVFGAAGIIYLVVNGLLTLMMRLIERKALAFERRN.

Over 1-15 the chain is Periplasmic; the sequence is MFEYLPELMKGLHTS. Positions 12–208 constitute an ABC transmembrane type-1 domain; the sequence is LHTSLTLTVA…VVNGLLTLMM (197 aa). A helical transmembrane segment spans residues 16-36; the sequence is LTLTVASLIVALILALIFTII. At 37–49 the chain is on the cytoplasmic side; it reads LTLKTPVLVWLVR. Residues 50–70 traverse the membrane as a helical segment; it reads GYITLFTGTPLLVQIFLIYYG. At 71–79 the chain is on the periplasmic side; it reads PGQFPTLQE. Residues 80 to 100 form a helical membrane-spanning segment; that stretch reads YPALWHLLSEPWLCALIALSL. The Cytoplasmic portion of the chain corresponds to 101–154; that stretch reads NSAAYTTQLFYGAIRAIPEGQWQSCSALGMSKKDTLAILLPYAFKRSLSSYSNE. Residues 155–175 form a helical membrane-spanning segment; it reads VVLVFKSTSLAYTITLMEVMG. Topologically, residues 176–186 are periplasmic; it reads YSQLLYGRTYD. A helical membrane pass occupies residues 187–207; sequence VMVFGAAGIIYLVVNGLLTLM. Residues 208-222 lie on the Cytoplasmic side of the membrane; the sequence is MRLIERKALAFERRN.

Belongs to the binding-protein-dependent transport system permease family. HisMQ subfamily. As to quaternary structure, the complex is composed of two ATP-binding proteins (ArtP), two transmembrane proteins (ArtM and ArtQ) and two solute-binding proteins (ArtJ and ArtI).

It localises to the cell inner membrane. In terms of biological role, part of the ABC transporter complex ArtPIQMJ involved in arginine transport. Probably responsible for the translocation of the substrate across the membrane. The sequence is that of Arginine ABC transporter permease protein ArtM (artM) from Escherichia coli (strain K12).